We begin with the raw amino-acid sequence, 444 residues long: RAC family serine/threonine-protein kinase homolog (444 aa).

One can recognise a PH domain in the interval 5 to 100; it reads PIKHEGFLTK…WIEILINERE (96 aa). In terms of domain architecture, Protein kinase spans 120-374; that stretch reads FELLNLVGKG…PNLIKRHPFF (255 aa). Residues 126–134 and Lys-149 each bind ATP; that span reads VGKGSFGKV. The active-site Proton acceptor is Asp-243. Thr-278 is subject to Phosphothreonine. Positions 375 to 444 constitute an AGC-kinase C-terminal domain; it reads RSIDWEQLFQ…TYVAESEHLR (70 aa).

It belongs to the protein kinase superfamily. AGC Ser/Thr protein kinase family. RAC subfamily.

It carries out the reaction L-seryl-[protein] + ATP = O-phospho-L-seryl-[protein] + ADP + H(+). The enzyme catalyses L-threonyl-[protein] + ATP = O-phospho-L-threonyl-[protein] + ADP + H(+). Functionally, predominantly involved during the aggregation to control cell polarity and chemotaxis. Phosphorylates talB, gefN, gefS, PI4P 5-kinase and gacQ. The sequence is that of RAC family serine/threonine-protein kinase homolog (pkbA) from Dictyostelium discoideum (Social amoeba).